Consider the following 177-residue polypeptide: ATP-dependent protease subunit HslV (177 aa).

Residue T6 is part of the active site. The Na(+) site is built by A162, C165, and T168.

Belongs to the peptidase T1B family. HslV subfamily. A double ring-shaped homohexamer of HslV is capped on each side by a ring-shaped HslU homohexamer. The assembly of the HslU/HslV complex is dependent on binding of ATP.

Its subcellular location is the cytoplasm. The catalysed reaction is ATP-dependent cleavage of peptide bonds with broad specificity.. Allosterically activated by HslU binding. Protease subunit of a proteasome-like degradation complex believed to be a general protein degrading machinery. In Desulfovibrio desulfuricans (strain ATCC 27774 / DSM 6949 / MB), this protein is ATP-dependent protease subunit HslV.